The sequence spans 185 residues: Peptidyl-tRNA hydrolase (185 aa).

Residue tyrosine 14 coordinates tRNA. Residue histidine 19 is the Proton acceptor of the active site. Phenylalanine 64, asparagine 66, and asparagine 112 together coordinate tRNA.

It belongs to the PTH family. As to quaternary structure, monomer.

It is found in the cytoplasm. It catalyses the reaction an N-acyl-L-alpha-aminoacyl-tRNA + H2O = an N-acyl-L-amino acid + a tRNA + H(+). Hydrolyzes ribosome-free peptidyl-tRNAs (with 1 or more amino acids incorporated), which drop off the ribosome during protein synthesis, or as a result of ribosome stalling. Its function is as follows. Catalyzes the release of premature peptidyl moieties from peptidyl-tRNA molecules trapped in stalled 50S ribosomal subunits, and thus maintains levels of free tRNAs and 50S ribosomes. The protein is Peptidyl-tRNA hydrolase of Lactobacillus johnsonii (strain CNCM I-12250 / La1 / NCC 533).